A 54-amino-acid chain; its full sequence is Large ribosomal subunit protein bL33 (54 aa).

It belongs to the bacterial ribosomal protein bL33 family.

In Buchnera aphidicola subsp. Cinara cedri (strain Cc), this protein is Large ribosomal subunit protein bL33.